The primary structure comprises 340 residues: Phosphoribosylformylglycinamidine cyclo-ligase (340 aa).

The protein belongs to the AIR synthase family.

Its subcellular location is the cytoplasm. The catalysed reaction is 2-formamido-N(1)-(5-O-phospho-beta-D-ribosyl)acetamidine + ATP = 5-amino-1-(5-phospho-beta-D-ribosyl)imidazole + ADP + phosphate + H(+). The protein operates within purine metabolism; IMP biosynthesis via de novo pathway; 5-amino-1-(5-phospho-D-ribosyl)imidazole from N(2)-formyl-N(1)-(5-phospho-D-ribosyl)glycinamide: step 2/2. This Streptococcus agalactiae serotype V (strain ATCC BAA-611 / 2603 V/R) protein is Phosphoribosylformylglycinamidine cyclo-ligase.